Reading from the N-terminus, the 115-residue chain is ComG operon protein 5 (115 aa).

The propeptide at 1–7 (MWRENKG) is leader sequence. F8 is subject to N-methylphenylalanine. The chain crosses the membrane as a helical span at residues 13–31 (TMSALSLWLFVLLTVVPLW).

In terms of processing, processing of ComGE in competent cells requires ComC.

It localises to the cell membrane. Its subcellular location is the cell surface. In terms of biological role, required for transformation and DNA binding. The chain is ComG operon protein 5 (comGE) from Bacillus subtilis (strain 168).